A 417-amino-acid chain; its full sequence is Fructose-1,6-bisphosphatase 1, chloroplastic (417 aa).

The transit peptide at 1-59 directs the protein to the chloroplast; the sequence is MAATAATTTSSHLLLSSSRHVASSSQPSILSPRSLFSNNGKRAPTGVRNHQYASGVRCM. Residues 24–35 are compositionally biased toward low complexity; sequence SSQPSILSPRSL. A disordered region spans residues 24 to 48; that stretch reads SSQPSILSPRSLFSNNGKRAPTGVR. Ala-60 carries the N-acetylalanine modification. Residues Glu-138, Glu-167, Asp-188, Leu-190, and Asp-191 each coordinate Mg(2+). 191–194 lines the substrate pocket; the sequence is DGSS. A disulfide bond links Cys-233 and Cys-238. 5 residues coordinate substrate: Asn-297, Tyr-329, Tyr-347, Tyr-349, and Lys-359. Position 365 (Glu-365) interacts with Mg(2+).

Belongs to the FBPase class 1 family. Homotetramer. Mg(2+) is required as a cofactor.

Its subcellular location is the plastid. It localises to the chloroplast stroma. The enzyme catalyses beta-D-fructose 1,6-bisphosphate + H2O = beta-D-fructose 6-phosphate + phosphate. The protein operates within carbohydrate biosynthesis; Calvin cycle. Its function is as follows. Catalyzes the irreversible reaction from fructose-1,6-bisphosphate to fructose-6-phosphate and inorganic phosphate, to regenerate the primary CO(2) acceptor molecule, ribulose-1,5-bisphosphate. Involved in the regulation of photosynthetic electron flow and sucrose synthesis. Its activity is critical for normal plant development and important for the regulation of a wide range of metabolic processes. This is Fructose-1,6-bisphosphatase 1, chloroplastic from Arabidopsis thaliana (Mouse-ear cress).